We begin with the raw amino-acid sequence, 156 residues long: Terrestric acid biosynthesis cluster protein E (156 aa).

It participates in secondary metabolite biosynthesis. Its function is as follows. Part of the tra gene cluster that produces terrestric acid. The clavatol biosynthesis cluster cla and the terrestric acid cluster tra are both involved in the production of peniphenones and penilactones. The non-reducing PKS claF is responsible for the formation of clavatol from successive condensations of 3 malonyl-CoA units, presumably with a simple acetyl-CoA starter unit, and 2 methylation steps. The esterase claE probably collaborates with claF by catalyzing the hydrolysis of ACP-bound acyl intermediates to free the ACP from stalled intermediates. The clavatol oxidase claD then converts clavatol to hydroxyclavatol. Spontaneous dehydration of hydroxyclavatol leads to the accumulation of the highly active ortho-quinone methide. On the other hand, the PKS-NRPS hybrid traA is involved in the formation of crustosic acid, with the help of traB and traD. The polyketide synthase module (PKS) of traA is responsible for the synthesis of the polyketide backbone via the condensation of an acetyl-CoA starter unit with 3 malonyl-CoA units. The downstream nonribosomal peptide synthetase (NRPS) module then amidates the carboxyl end of the polyketide with L-malic acid. Because traA lacks a designated enoylreductase (ER) domain, the required activity is provided the enoyl reductase traG. Crustosic acid undergoes decarboxylation and isomerization to the terrestric acid, catalyzed by the 2-oxoglutarate-dependent dioxygenase traH. Both acids are further converted to the 2 gamma-butyrolactones (R)-5-methyltetronic acid and (S)-5-carboxylmethyltetronic acid, with involvement of the cytochrome P450 monooxygenase claJ. Spontaneous addition of the methide to these gamma-butyrolactones leads to peniphenone D and penilactone D, which undergo again stereospecific attacking by methide to give penilactones A and B. TraE seems not to be involved in the biosynthesis of peniphenones and penilactones in the conditions used to study its function. The sequence is that of Terrestric acid biosynthesis cluster protein E from Penicillium crustosum (Blue mold fungus).